Consider the following 194-residue polypeptide: dCTP deaminase (194 aa).

DCTP-binding positions include 110 to 115 (RSSLAR), D128, 136 to 138 (VLE), Y171, K178, and Q182. E138 functions as the Proton donor/acceptor in the catalytic mechanism.

Belongs to the dCTP deaminase family. Homotrimer.

The enzyme catalyses dCTP + H2O + H(+) = dUTP + NH4(+). Its pathway is pyrimidine metabolism; dUMP biosynthesis; dUMP from dCTP (dUTP route): step 1/2. Functionally, catalyzes the deamination of dCTP to dUTP. This chain is dCTP deaminase, found in Pasteurella multocida (strain Pm70).